Reading from the N-terminus, the 341-residue chain is tRNA dimethylallyltransferase (341 aa).

An ATP-binding site is contributed by 15-22 (GPTAAGKT). Position 17-22 (17-22 (TAAGKT)) interacts with substrate. Interaction with substrate tRNA regions lie at residues 44–47 (DSAL), 168–172 (QRIQR), 253–258 (RCVGYR), and 302–309 (KRQITWLR).

It belongs to the IPP transferase family. In terms of assembly, monomer. Mg(2+) is required as a cofactor.

It catalyses the reaction adenosine(37) in tRNA + dimethylallyl diphosphate = N(6)-dimethylallyladenosine(37) in tRNA + diphosphate. Catalyzes the transfer of a dimethylallyl group onto the adenine at position 37 in tRNAs that read codons beginning with uridine, leading to the formation of N6-(dimethylallyl)adenosine (i(6)A). This Verminephrobacter eiseniae (strain EF01-2) protein is tRNA dimethylallyltransferase.